The primary structure comprises 144 residues: Toxin MT0934 (144 aa).

Its function is as follows. Toxic component of a type II toxin-antitoxin (TA) system. Its toxic effect is neutralized by coexpression with cognate antitoxin MT0933. This chain is Toxin MT0934, found in Mycobacterium tuberculosis (strain CDC 1551 / Oshkosh).